The chain runs to 35 residues: Cupiennin-2b (35 aa).

The residue at position 35 (Gln35) is a Glutamine amide.

Expressed by the venom gland.

It localises to the secreted. This chain is Cupiennin-2b, found in Cupiennius salei (American wandering spider).